The chain runs to 147 residues: Hemoglobin subunit deltaH (147 aa).

The Globin domain occupies 3-147 (RLTDSEKAEV…MANALAHKYH (145 aa)). The heme b site is built by H64 and H93.

It belongs to the globin family. In terms of assembly, heterotetramer of two delta chains and two alpha chains. In terms of tissue distribution, red blood cells.

This chain is Hemoglobin subunit deltaH (HBD), found in Dendrohyrax dorsalis (Beecroft's tree hyrax).